The chain runs to 2028 residues: Pecanex-like protein 3 (2028 aa).

A run of 2 helical transmembrane segments spans residues 33–53 (CFHL…YMVL) and 54–74 (PPSL…FATI). Asn-95 carries N-linked (GlcNAc...) asparagine glycosylation. Positions 96-116 (STMGEQEEEAAQGESSLPRDP) are disordered. Ser-127 is subject to Phosphoserine. The residue at position 129 (Thr-129) is a Phosphothreonine. Disordered stretches follow at residues 193–239 (IGDL…PMSP) and 263–625 (LVRT…SHSR). Residues 198-208 (QTPPGVVPDPS) show a composition bias toward pro residues. 2 stretches are compositionally biased toward basic and acidic residues: residues 263–273 (LVRTSSRREQC) and 305–319 (TDRE…EKTN). An N-linked (GlcNAc...) asparagine glycan is attached at Asn-319. Thr-370 is modified (phosphothreonine). Residues Ser-392 and Ser-431 each carry the phosphoserine modification. Residues 427 to 437 (GSELSPASSLR) are compositionally biased toward polar residues. Residues 444–459 (TDSSSSTSCYSPESSQ) show a composition bias toward low complexity. Residues 488 to 497 (TQRTPSTASA) show a composition bias toward polar residues. Phosphoserine is present on residues Ser-505 and Ser-521. 7 helical membrane-spanning segments follow: residues 793-815 (NIFG…LKGF), 819-836 (IWVF…YSLL), 852-872 (WVIA…IWLL), 880-900 (PFPP…FFCA), 903-923 (VATV…LPQV), 946-968 (SPLT…YGFC), and 980-1000 (HVPV…YHLS). Ser-1025 carries the phosphoserine modification. The next 4 helical transmembrane spans lie at 1053–1073 (LVMC…TVFI), 1078–1098 (VLGF…HYLL), 1244–1264 (FVLT…HAFA), and 1280–1300 (LLSG…VFIM). Ser-1697 is modified (phosphoserine). N-linked (GlcNAc...) asparagine glycosylation is present at Asn-1770. The tract at residues 1845–2028 (GLTSLSNHPP…AAQPLLEHQY (184 aa)) is disordered. Over residues 1890–1921 (RPPPLLQWPPPRLPGPPPASPAPTEGPRPSRP) the composition is skewed to pro residues. Residues Ser-1909 and Ser-1955 each carry the phosphoserine modification. A compositionally biased stretch (low complexity) spans 1966 to 1977 (PLDLSLSPDVSS). Positions 1978 to 1987 (EASPARTTQD) are enriched in polar residues.

This sequence belongs to the pecanex family.

The protein resides in the membrane. This is Pecanex-like protein 3 from Mus musculus (Mouse).